Here is a 260-residue protein sequence, read N- to C-terminus: Mitochondrial import inner membrane translocase subunit Tim29 (260 aa).

The N-terminal 31 residues, methionine 1–leucine 31, are a transit peptide targeting the mitochondrion. The Mitochondrial matrix segment spans residues glycine 32–arginine 59. A helical membrane pass occupies residues alanine 60–alanine 77. Residues proline 78 to arginine 260 lie on the Mitochondrial intermembrane side of the membrane.

In terms of assembly, component of the TIM22 complex, which core is composed of TIMM22, associated with TIMM10 (TIMM10A and/or TIMM10B), TIMM9, AGK and TIMM29. Interacts with TIMM10B; the interaction is direct. Interacts with TOMM40; linking the TIM22 complex to the TOM complex. Interacts with TIMM22 (when oxidized); the interaction is direct.

It is found in the mitochondrion inner membrane. Component of the TIM22 complex, a complex that mediates the import and insertion of multi-pass transmembrane proteins into the mitochondrial inner membrane. The TIM22 complex forms a twin-pore translocase that uses the membrane potential as the external driving force. Required for the stability of the TIM22 complex and functions in the assembly of the TIMM22 protein into the TIM22 complex. May facilitate cooperation between TIM22 and TOM complexes by interacting with TOMM40. This Homo sapiens (Human) protein is Mitochondrial import inner membrane translocase subunit Tim29.